The following is an 84-amino-acid chain: MAQTQSPLQWLATTLIRGYQIFISPILGPRCRFNPTCSHYAIEAIKVHGTAKGCWFALKRILKCHPLHPGGSDPVPPKNDRCNK.

It belongs to the UPF0161 family.

It is found in the cell inner membrane. Its function is as follows. Could be involved in insertion of integral membrane proteins into the membrane. The chain is Putative membrane protein insertion efficiency factor from Shewanella oneidensis (strain ATCC 700550 / JCM 31522 / CIP 106686 / LMG 19005 / NCIMB 14063 / MR-1).